The sequence spans 493 residues: Probable GTP-binding protein OBGM, mitochondrial (493 aa).

Residues 1–28 constitute a mitochondrion transit peptide; it reads MWLIRAIVPVRYLGSYKRPQKPPWMRNP. The Obg domain maps to 48 to 303; that stretch reads TRMRDRFTLY…AVLILELKSI (256 aa). 2 disordered regions span residues 65–89 and 146–215; these read SGCSSVRRSRADRYGKPDGGNGGRG and GEIP…EDDD. Residues 187–196 show a composition bias toward acidic residues; sequence SESDQDDTEQ. An OBG-type G domain is found at 304–476; sequence ADVGLVGMPN…LKDGLKMLVD (173 aa). Residues 310 to 317 and 356 to 360 each bind GTP; these read GMPNAGKS and DIPGL.

The protein belongs to the TRAFAC class OBG-HflX-like GTPase superfamily. OBG GTPase family.

Its subcellular location is the mitochondrion. In terms of biological role, may bind GTP and have GTPase activity. The polypeptide is Probable GTP-binding protein OBGM, mitochondrial (ATOBGM) (Arabidopsis thaliana (Mouse-ear cress)).